Here is a 397-residue protein sequence, read N- to C-terminus: Digeranylgeranylglycerophospholipid reductase 3 (397 aa).

Residues Ala-16, Asp-35, Cys-46, Ala-47, Gly-49, Arg-102, Ala-126, Asp-283, Gly-295, and Ile-296 each coordinate FAD. Lys-338 lines the a 2,3-bis-O-(geranylgeranyl)-sn-glycerol 1-phospholipid pocket.

This sequence belongs to the geranylgeranyl reductase family. DGGGPL reductase subfamily. It depends on FAD as a cofactor.

It catalyses the reaction a 2,3-bis-O-phytanyl-sn-glycerol 1-phospholipid + 8 A = a 2,3-bis-O-(geranylgeranyl)-sn-glycerol 1-phospholipid + 8 AH2. It carries out the reaction 2,3-bis-O-(phytanyl)-sn-glycerol 1-phosphate + 8 A = 2,3-bis-O-(geranylgeranyl)-sn-glycerol 1-phosphate + 8 AH2. The catalysed reaction is CDP-2,3-bis-O-(geranylgeranyl)-sn-glycerol + 8 AH2 = CDP-2,3-bis-O-(phytanyl)-sn-glycerol + 8 A. The enzyme catalyses archaetidylserine + 8 AH2 = 2,3-bis-O-phytanyl-sn-glycero-3-phospho-L-serine + 8 A. Its pathway is membrane lipid metabolism; glycerophospholipid metabolism. Functionally, is involved in the reduction of 2,3-digeranylgeranylglycerophospholipids (unsaturated archaeols) into 2,3-diphytanylglycerophospholipids (saturated archaeols) in the biosynthesis of archaeal membrane lipids. Catalyzes the formation of archaetidic acid (2,3-di-O-phytanyl-sn-glyceryl phosphate) from 2,3-di-O-geranylgeranylglyceryl phosphate (DGGGP) via the hydrogenation of each double bond of the isoprenoid chains. Is also probably able to reduce double bonds of geranyl groups in CDP-2,3-bis-O-(geranylgeranyl)-sn-glycerol and archaetidylserine, thus acting at various stages in the biosynthesis of archaeal membrane lipids. In Methanosphaera stadtmanae (strain ATCC 43021 / DSM 3091 / JCM 11832 / MCB-3), this protein is Digeranylgeranylglycerophospholipid reductase 3.